Here is a 369-residue protein sequence, read N- to C-terminus: Outer membrane protein P2 (369 aa).

The N-terminal stretch at M1 to A20 is a signal peptide.

It belongs to the Gram-negative porin family. As to quaternary structure, homotrimer.

The protein resides in the cell outer membrane. Its function is as follows. Forms pores that allow passive diffusion of small molecules across the outer membrane. This Haemophilus influenzae protein is Outer membrane protein P2 (ompP2).